A 186-amino-acid chain; its full sequence is Ribosome-recycling factor (186 aa).

The disordered stretch occupies residues 144–163; that stretch reads EKDGVIGQDESRAQSERVQK.

It belongs to the RRF family.

The protein localises to the cytoplasm. In terms of biological role, responsible for the release of ribosomes from messenger RNA at the termination of protein biosynthesis. May increase the efficiency of translation by recycling ribosomes from one round of translation to another. In Rhizobium etli (strain CIAT 652), this protein is Ribosome-recycling factor.